The sequence spans 729 residues: Fatty acid oxidation complex subunit alpha (729 aa).

The enoyl-CoA hydratase/isomerase stretch occupies residues 1-189 (MLYKGDTLYL…KIGLVDGVVK (189 aa)). A substrate-binding site is contributed by aspartate 296. The tract at residues 311 to 729 (ETPKQAAVLG…ARLVGDLKTA (419 aa)) is 3-hydroxyacyl-CoA dehydrogenase. Residues methionine 324, aspartate 343, 400–402 (VVE), lysine 407, and serine 429 each bind NAD(+). Residue histidine 450 is the For 3-hydroxyacyl-CoA dehydrogenase activity of the active site. Residue asparagine 453 coordinates NAD(+). Substrate contacts are provided by asparagine 500 and tyrosine 660.

This sequence in the N-terminal section; belongs to the enoyl-CoA hydratase/isomerase family. The protein in the C-terminal section; belongs to the 3-hydroxyacyl-CoA dehydrogenase family. As to quaternary structure, heterotetramer of two alpha chains (FadB) and two beta chains (FadA).

It catalyses the reaction a (3S)-3-hydroxyacyl-CoA + NAD(+) = a 3-oxoacyl-CoA + NADH + H(+). The enzyme catalyses a (3S)-3-hydroxyacyl-CoA = a (2E)-enoyl-CoA + H2O. It carries out the reaction a 4-saturated-(3S)-3-hydroxyacyl-CoA = a (3E)-enoyl-CoA + H2O. The catalysed reaction is (3S)-3-hydroxybutanoyl-CoA = (3R)-3-hydroxybutanoyl-CoA. It catalyses the reaction a (3Z)-enoyl-CoA = a 4-saturated (2E)-enoyl-CoA. The enzyme catalyses a (3E)-enoyl-CoA = a 4-saturated (2E)-enoyl-CoA. Its pathway is lipid metabolism; fatty acid beta-oxidation. Functionally, involved in the aerobic and anaerobic degradation of long-chain fatty acids via beta-oxidation cycle. Catalyzes the formation of 3-oxoacyl-CoA from enoyl-CoA via L-3-hydroxyacyl-CoA. It can also use D-3-hydroxyacyl-CoA and cis-3-enoyl-CoA as substrate. The polypeptide is Fatty acid oxidation complex subunit alpha (Escherichia coli (strain SE11)).